We begin with the raw amino-acid sequence, 127 residues long: uncharacterized protein (127 aa).

A run of 2 helical transmembrane segments spans residues leucine 42 to isoleucine 62 and glycine 78 to leucine 98.

It localises to the membrane. This is an uncharacterized protein from Schizosaccharomyces pombe (strain 972 / ATCC 24843) (Fission yeast).